A 1863-amino-acid polypeptide reads, in one-letter code: 5'-3' DNA helicase ZGRF1 (1863 aa).

Disordered regions lie at residues 78–110, 132–196, and 300–349; these read SRAV…QPSG, ENSE…PLSL, and TQSI…PEAQ. Residues 81-90 are compositionally biased toward basic and acidic residues; the sequence is VEPDGSREAL. The segment covering 92–105 has biased composition (low complexity); the sequence is SGSRTLVSSSRSLG. Composition is skewed to polar residues over residues 173–185 and 300–321; these read PVST…ITFS and TQSI…TTSR. Serine 331 and serine 445 each carry phosphoserine. 3 disordered regions span residues 460 to 496, 524 to 545, and 610 to 664; these read PVSP…SKSN, TSDT…ERWE, and GDVK…GVSP. Basic and acidic residues predominate over residues 533–545; that stretch reads EDSRLSQDSERWE. Residues cysteine 1111, histidine 1113, cysteine 1136, and cysteine 1144 each coordinate Zn(2+). Residues 1111 to 1153 form a GRF-type zinc finger; it reads CHHNQPAKLVMVKKEGPNKGRLFYTCDKSKDNQCKFFKWLEEV.

As to quaternary structure, interacts with DNA repair protein RAD51; the interaction promotes RAD51 strand exchange activity. Also interacts with DNA repair proteins EXO1 and BRCA1; the interactions are increased following DNA damage induction.

Its subcellular location is the nucleus. The enzyme catalyses ATP + H2O = ADP + phosphate + H(+). It catalyses the reaction Couples ATP hydrolysis with the unwinding of duplex DNA at the replication fork by translocating in the 5'-3' direction. This creates two antiparallel DNA single strands (ssDNA). The leading ssDNA polymer is the template for DNA polymerase III holoenzyme which synthesizes a continuous strand.. Its function is as follows. 5'-3' DNA helicase which is recruited to sites of DNA damage and promotes repair of replication-blocking DNA lesions through stimulation of homologous recombination (HR). Promotes HR by directly stimulating RAD51-mediated strand exchange activity. Not required to load RAD51 at sites of DNA damage but promotes recombinational repair after RAD51 recruitment. Also promotes HR by positively regulating EXO1-mediated DNA end resection of DNA double-strand breaks. Required for recruitment of replication protein RPA2 to DNA damage sites. Promotes the initiation of the G2/M checkpoint but not its maintenance. Catalyzes Holliday junction branch migration and dissociation of D-loops and DNA flaps. This chain is 5'-3' DNA helicase ZGRF1 (Zgrf1), found in Mus musculus (Mouse).